The following is a 151-amino-acid chain: Calcium-binding protein SPEC 2C (151 aa).

4 EF-hand domains span residues E10–E45, L46–Q78, G81–P116, and M118–Y151. Residues D23, D25, D27, K29, E34, D59, D61, S63, E70, D94, D96, S98, S100, E105, D131, D135, E137, and E142 each contribute to the Ca(2+) site.

In terms of tissue distribution, found in cell lineages giving rise to the aboral ectoderm, a squamous epithelium covering the surface of the late stage embryo and larva.

In terms of biological role, calcium-binding protein involved in larval development and metamorphosis. Likely to function as calcium buffers mediating the transport of calcium from the sea water to the blastocoel where calcium is required for skeleton formation. This is Calcium-binding protein SPEC 2C (SPEC2C) from Strongylocentrotus purpuratus (Purple sea urchin).